Consider the following 142-residue polypeptide: Antirestriction protein KlcA (142 aa).

Belongs to the antirestriction protein family.

Could be involved in overcoming restriction barriers during establishment after conjugative transfer. In Escherichia coli, this protein is Antirestriction protein KlcA (klcA).